The following is a 379-amino-acid chain: MTPPHNYLAVIKVVGIGGGGVNAVNRMIEQGLKGVEFMAINTDAQALLMSDADVKLDVGRDSTRGLGAGADPEVGRKAAEDAKDEIEELLRGADMVFVTAGEGGGTGTGGAPVIASIARKLGALTVGVVTRPFSFEGKRRSNQAENGIAALRESCDTLIVIPNDRLLQMGDTAVSLMDAFRSADEVLLNGVQGITDLITTPGLINVDFADVKGIMSGAGTALMGIGSARGDGRSLKAAEIAINSPLLEASMEGAQGVLMSIAGGSDLGLFEINEAASLVQDAAHPDANIIFGTVIDDSLGDEVRVTVIAAGFEANGPGRTPVMGSTGGAHRIESAKAGALTSTLFEPVDAASAPLHTNGAALSIGGDDDDVDVPPFMRR.

GTP contacts are provided by residues 18–22 (GGGVN), 105–107 (GTG), E136, R140, and D184.

This sequence belongs to the FtsZ family. Homodimer. Polymerizes to form a dynamic ring structure in a strictly GTP-dependent manner. Interacts directly with several other division proteins.

It is found in the cytoplasm. Functionally, essential cell division protein that forms a contractile ring structure (Z ring) at the future cell division site. The regulation of the ring assembly controls the timing and the location of cell division. One of the functions of the FtsZ ring is to recruit other cell division proteins to the septum to produce a new cell wall between the dividing cells. Binds GTP and shows GTPase activity. This is Cell division protein FtsZ from Mycobacterium leprae (strain TN).